Reading from the N-terminus, the 129-residue chain is L-ectoine synthase (129 aa).

Belongs to the ectoine synthase family.

The catalysed reaction is (2S)-4-acetamido-2-aminobutanoate = L-ectoine + H2O. Its pathway is amine and polyamine biosynthesis; ectoine biosynthesis; L-ectoine from L-aspartate 4-semialdehyde: step 3/3. Its function is as follows. Catalyzes the circularization of gamma-N-acetyl-alpha,gamma-diaminobutyric acid (ADABA) to ectoine (1,4,5,6-tetrahydro-2-methyl-4-pyrimidine carboxylic acid), which is an excellent osmoprotectant. This is L-ectoine synthase from Desulfosudis oleivorans (strain DSM 6200 / JCM 39069 / Hxd3) (Desulfococcus oleovorans).